The primary structure comprises 134 residues: Profilin-1 (134 aa).

A disulfide bridge links Cys-13 with Cys-118. An Involved in PIP2 interaction motif is present at residues 84–100 (AVIRGKKGSGGITIKKT). Thr-114 bears the Phosphothreonine mark.

The protein belongs to the profilin family. Occurs in many kinds of cells as a complex with monomeric actin in a 1:1 ratio. In terms of processing, phosphorylated by MAP kinases.

It localises to the cytoplasm. The protein localises to the cytoskeleton. In terms of biological role, binds to actin and affects the structure of the cytoskeleton. At high concentrations, profilin prevents the polymerization of actin, whereas it enhances it at low concentrations. The protein is Profilin-1 of Olea europaea (Common olive).